Reading from the N-terminus, the 802-residue chain is E3 ubiquitin-protein ligase UHRF2 (802 aa).

One can recognise a Ubiquitin-like domain in the interval 1–78; that stretch reads MWIQVRTIDG…IQLLVRPDPD (78 aa). Disordered stretches follow at residues 80–116 and 153–197; these read LPGT…TSAR and RASD…STSN. Polar residues-rich tracts occupy residues 82-96, 153-177, and 188-197; these read GTST…SNSP, RASD…TNGN, and KLDSVPSTSN. The interval 117–311 is required for interaction with histone H3; that stretch reads ARLIDPGFGI…VDEIFKIERP (195 aa). Residues 194–288 form an interaction with PCNP region; sequence STSNSDCVAA…KELRVKIFLG (95 aa). The segment at 344–395 adopts a PHD-type zinc-finger fold; sequence SCSCRVCGGKHEPNMQLLCDECNVAYHIYCLNPPLDKVPEEEYWYCPSCKTD. The segment at 414 to 644 is methyl-CpG binding and interaction with HDAC1; that stretch reads KMPSASTESR…LQYPAGYPSD (231 aa). The YDG domain maps to 448–612; it reads GPIPGIPVGS…FLVWRYLLRR (165 aa). Residues 640–674 are disordered; that stretch reads GYPSDKEGKKPKGQSKKQPSGTTKRPISDDDCPSA. At Ser667 the chain carries Phosphoserine. An RING-type zinc finger spans residues 733–772; it reads CVCCQELVYQPVTTECFHNVCKDCLQRSFKAQVFSCPACR.

As to quaternary structure, homodimer; disulfide-linked. Binds methylated CpG containing oligonucleotides. Interacts with H3; the interaction has a preference for the 'Lys-9' trimethylated form of H3 (H3K9me3). Interacts with PCNP. Interacts with HDAC1. Interacts directly with CCNE1; the interaction ubiquitinates CCNE1 and appears independent of CCNE1 phosphorylation. Interacts with CCND1; the interaction ubiquitinates CCND1 and appears independent of CCND1 phosphorylation. Interacts with p53/TP53 and RB1. Interacts with UBE2I. Interacts with ZNF618. Interacts with UHRF1. Interacts with FANCD2. Interacts with ATR. Interacts with PCNA. In terms of processing, may be autoubiquitinated; which may lead to proteasomal degradation. Post-translationally, phosphorylated. Phosphorylation may be mediated by CDK2. Autosumoylated.

The protein localises to the nucleus. It localises to the chromosome. The catalysed reaction is S-ubiquitinyl-[E2 ubiquitin-conjugating enzyme]-L-cysteine + [acceptor protein]-L-lysine = [E2 ubiquitin-conjugating enzyme]-L-cysteine + N(6)-ubiquitinyl-[acceptor protein]-L-lysine.. Its pathway is protein modification; protein ubiquitination. E3 ligase activity is robustly activated by 5-hydroxymethylcytosine. Functionally, E3 ubiquitin ligase that plays important roles in DNA methylation, histone modifications, cell cycle and DNA repair. Acts as a specific reader for 5-hydroxymethylcytosine (5hmC) and thereby recruits various substrates to these sites to ubiquitinate them. This activity also allows the maintenance of 5mC levels at specific genomic loci and regulates neuron-related gene expression. Participates in cell cycle regulation by ubiquitinating cyclins CCND1 and CCNE1 and thereby inducing G1 arrest. Also ubiquitinates PCNP leading to its degradation by the proteasome. Plays an active role in DNA damage repair by ubiquitinating p21/CDKN1A leading to its proteasomal degradation. Also promotes DNA repair by acting as an interstrand cross-links (ICLs) sensor. Mechanistically, cooperates with UHRF1 to ensure recruitment of FANCD2 to ICLs, leading to FANCD2 monoubiquitination and subsequent activation. Contributes to UV-induced DNA damage response by physically interacting with ATR in response to irradiation, thereby promoting ATR activation. The chain is E3 ubiquitin-protein ligase UHRF2 (UHRF2) from Homo sapiens (Human).